Reading from the N-terminus, the 306-residue chain is Probable pinoresinol-lariciresinol reductase 3 (306 aa).

NADP(+) is bound by residues 14 to 20 (GATGRLG), Arg39, and Lys46. Lys131 functions as the Proton acceptor in the catalytic mechanism. Arg135 is a binding site for NADP(+).

The protein belongs to the NmrA-type oxidoreductase family. Isoflavone reductase subfamily. As to quaternary structure, dimer.

Probable reductase that might be involved in the reduction of lariciresinol into secoisolariciresinol. In most plant species, a single enzyme is able to reduce both pinoresinol and lariciresinol efficiently while in Arabidopsis, PRR1 and PRR2 show a strict substrate selectivity for pinoresinol. This chain is Probable pinoresinol-lariciresinol reductase 3 (PLR3), found in Arabidopsis thaliana (Mouse-ear cress).